We begin with the raw amino-acid sequence, 70 residues long: Delta-hexatoxin-Mg1b (70 aa).

The signal sequence occupies residues 1-26; that stretch reads MKILEKALLENDSAAEEESRNLRTKR. 4 disulfide bridges follow: cysteine 27–cysteine 41, cysteine 34–cysteine 46, cysteine 40–cysteine 57, and cysteine 42–cysteine 68.

Expressed by the venom gland.

The protein localises to the secreted. In terms of biological role, inhibits tetrodotoxin-sensitive sodium channels (Nav). Intracranial injection into mice causes strong convulsions and death. Intrathorax injection into crickets causes paralysis prolonged for 2 minutes, followed by recovery. This chain is Delta-hexatoxin-Mg1b, found in Macrothele gigas (Japanese funnel web spider).